A 111-amino-acid polypeptide reads, in one-letter code: Phosphoribosyl-AMP cyclohydrolase (111 aa).

Position 80 (Asp80) interacts with Mg(2+). A Zn(2+)-binding site is contributed by Cys81. 2 residues coordinate Mg(2+): Asp82 and Asp84. Residues Cys97 and Cys104 each contribute to the Zn(2+) site.

It belongs to the PRA-CH family. As to quaternary structure, homodimer. Requires Mg(2+) as cofactor. The cofactor is Zn(2+).

The protein resides in the cytoplasm. It carries out the reaction 1-(5-phospho-beta-D-ribosyl)-5'-AMP + H2O = 1-(5-phospho-beta-D-ribosyl)-5-[(5-phospho-beta-D-ribosylamino)methylideneamino]imidazole-4-carboxamide. The protein operates within amino-acid biosynthesis; L-histidine biosynthesis; L-histidine from 5-phospho-alpha-D-ribose 1-diphosphate: step 3/9. Functionally, catalyzes the hydrolysis of the adenine ring of phosphoribosyl-AMP. This is Phosphoribosyl-AMP cyclohydrolase from Mycobacterium ulcerans (strain Agy99).